The following is a 313-amino-acid chain: Pyrimidine-specific ribonucleoside hydrolase RihB (313 aa).

The Proton acceptor role is filled by glutamate 11. The Ca(2+) site is built by glutamate 11, aspartate 16, and valine 124. Residues glutamine 227 and histidine 239 each contribute to the substrate site. Position 240 (aspartate 240) interacts with Ca(2+).

It belongs to the IUNH family. RihB subfamily. Homotetramer. Ca(2+) serves as cofactor.

The enzyme catalyses a pyrimidine ribonucleoside + H2O = a pyrimidine nucleobase + D-ribose. In terms of biological role, hydrolyzes cytidine or uridine to ribose and cytosine or uracil, respectively. Has a clear preference for cytidine over uridine. Strictly specific for ribonucleosides. In Shigella flexneri serotype 5b (strain 8401), this protein is Pyrimidine-specific ribonucleoside hydrolase RihB.